Reading from the N-terminus, the 439-residue chain is Xaa-Pro dipeptidase (439 aa).

Mn(2+) contacts are provided by Asp244, Asp255, His335, Glu380, and Glu419.

It belongs to the peptidase M24B family. Bacterial-type prolidase subfamily. It depends on Mn(2+) as a cofactor.

The enzyme catalyses Xaa-L-Pro dipeptide + H2O = an L-alpha-amino acid + L-proline. In terms of biological role, splits dipeptides with a prolyl residue in the C-terminal position. In Shewanella sediminis (strain HAW-EB3), this protein is Xaa-Pro dipeptidase.